Reading from the N-terminus, the 1534-residue chain is Dicer-like protein 2 (1534 aa).

Over residues 1–10 (MDQDPRKDNP) the composition is skewed to basic and acidic residues. The segment at 1-36 (MDQDPRKDNPVEMDVDRDDSSQDPDDNESFKSALDE) is disordered. Over residues 11–27 (VEMDVDRDDSSQDPDDN) the composition is skewed to acidic residues. In terms of domain architecture, Helicase ATP-binding spans 65–249 (TPAALTARAY…IEKLEQVLDA (185 aa)). Residue 78–85 (MFEASLKQ) participates in ATP binding. A DEAH box motif is present at residues 192 to 195 (DEAH). The Helicase C-terminal domain occupies 404–575 (KVQTLLKVLA…NAELELLDDP (172 aa)). In terms of domain architecture, Dicer dsRNA-binding fold spans 597 to 700 (ARSHLNHFCA…LPTKVSDFLA (104 aa)). RNase III domains lie at 959 to 1107 (MSLV…MCGG) and 1153 to 1353 (LEPL…VDSG). Glu1193, Asp1339, and Glu1342 together coordinate Mg(2+). The 101-residue stretch at 1383–1483 (HPNVELQILA…AEKGCLVIKA (101 aa)) folds into the DRBM domain. A compositionally biased stretch (basic and acidic residues) spans 1492-1504 (KAAAKEDKGHNTE). The interval 1492–1534 (KAAAKEDKGHNTENGDANADNGQSGEKEEVPDCRDADGDTVMN) is disordered. A compositionally biased stretch (polar residues) spans 1505–1515 (NGDANADNGQS). Positions 1516-1528 (GEKEEVPDCRDAD) are enriched in basic and acidic residues.

It belongs to the helicase family. Dicer subfamily. Requires Mg(2+) as cofactor. It depends on Mn(2+) as a cofactor.

Its function is as follows. Dicer-like endonuclease involved in cleaving double-stranded RNA in the RNA interference (RNAi) pathway. Produces 21 to 25 bp dsRNAs (siRNAs) which target the selective destruction of homologous RNAs leading to sequence-specific suppression of gene expression, called post-transcriptional gene silencing (PTGS). Part of a broad host defense response against viral infection and transposons. Controls the expression of the non-LTR retrotransposon Tad in the African strain, Adiomopoume. The protein is Dicer-like protein 2 (dcl-2) of Neurospora crassa (strain ATCC 24698 / 74-OR23-1A / CBS 708.71 / DSM 1257 / FGSC 987).